Consider the following 833-residue polypeptide: DNA ligase (833 aa).

NAD(+) is bound by residues 35 to 39, 84 to 85, and Glu115; these read DADYD and SL. Lys117 serves as the catalytic N6-AMP-lysine intermediate. Residues Arg138, Glu175, Lys292, and Lys316 each coordinate NAD(+). Zn(2+) is bound by residues Cys410, Cys413, Cys428, and Cys434. The region spanning 750–833 is the BRCT domain; sequence EKTGPLDGQT…AFLGDHGQQP (84 aa).

It belongs to the NAD-dependent DNA ligase family. LigA subfamily. Mg(2+) serves as cofactor. Mn(2+) is required as a cofactor.

It catalyses the reaction NAD(+) + (deoxyribonucleotide)n-3'-hydroxyl + 5'-phospho-(deoxyribonucleotide)m = (deoxyribonucleotide)n+m + AMP + beta-nicotinamide D-nucleotide.. In terms of biological role, DNA ligase that catalyzes the formation of phosphodiester linkages between 5'-phosphoryl and 3'-hydroxyl groups in double-stranded DNA using NAD as a coenzyme and as the energy source for the reaction. It is essential for DNA replication and repair of damaged DNA. The protein is DNA ligase of Xanthomonas axonopodis pv. citri (strain 306).